Consider the following 411-residue polypeptide: Lissencephaly-1 homolog (411 aa).

A LisH domain is found at 9-41 (QREELNQAIADYLGSNGYADSLETFRKEADLST). Positions 56-83 (TSVIRLQKKVMDLEAKLTEAEKEVIEGA) form a coiled coil. 7 WD repeats span residues 106–147 (GHRA…RSLK), 148–187 (GHTDSVQDVAFDAQGKLLASCSADLSIKLWDFQQSYECVK), 191–230 (GHDHNVSSVAFVPAGDYVLSASRDRTIKMWEVATGYCVKT), 233–272 (GHREWVRMVRVHIEGSIFATCSNDHTIRVWLTNSKDCKVE), 275–334 (DHEH…CLLT), 337–376 (GHDNWVRGLAFHPGGKYLVSASDDKTIRVWDLRNKRCMKT), and 379–411 (AHQHFCTSIDFHKAHPYVISGSVDQSVKVWECR).

It belongs to the WD repeat LIS1/nudF family.

The protein resides in the cytoplasm. Its subcellular location is the cytoskeleton. The protein localises to the microtubule organizing center. It localises to the centrosome. Positively regulates the activity of the minus-end directed microtubule motor protein dynein. May enhance dynein-mediated microtubule sliding by targeting dynein to the microtubule plus end. Required for several dynein- and microtubule-dependent processes. This is Lissencephaly-1 homolog from Drosophila mojavensis (Fruit fly).